Reading from the N-terminus, the 150-residue chain is UPF0178 protein Ssed_1350 (150 aa).

The protein belongs to the UPF0178 family.

This Shewanella sediminis (strain HAW-EB3) protein is UPF0178 protein Ssed_1350.